The following is a 512-amino-acid chain: Kelch repeat protein C2 (512 aa).

The region spanning 2–67 (ESVIFSINGE…MRWKKINITI (66 aa)) is the BTB domain. Kelch repeat units lie at residues 216–261 (IKHN…LHNC), 262–307 (LYII…VNDG), 309–354 (LYVI…FVND), 356–403 (IYVM…EYDG), 405–449 (IYVI…SCGD), and 452–498 (LIIA…THKS).

The protein belongs to the poxviruses Kelch family.

This chain is Kelch repeat protein C2, found in Vaccinia virus (strain Copenhagen) (VACV).